A 248-amino-acid polypeptide reads, in one-letter code: Large ribosomal subunit protein uL30B (248 aa).

Residues Met1 to Thr45 are disordered. The span at Ile8–Ala41 shows a compositional bias: basic and acidic residues.

This sequence belongs to the universal ribosomal protein uL30 family.

Functionally, binds to G-rich structures in 28S rRNA and in mRNAs. Plays a regulatory role in the translation apparatus; inhibits cell-free translation of mRNAs. The protein is Large ribosomal subunit protein uL30B (Rpl7-2) of Paramecium tetraurelia.